Here is a 278-residue protein sequence, read N- to C-terminus: Dermonecrotic toxin LspiSicTox-betaIE2i (278 aa).

Residue His5 is part of the active site. Mg(2+) is bound by residues Glu25 and Asp27. His41 functions as the Nucleophile in the catalytic mechanism. 2 cysteine pairs are disulfide-bonded: Cys45–Cys51 and Cys47–Cys190. Glu85 provides a ligand contact to Mg(2+).

Belongs to the arthropod phospholipase D family. Class II subfamily. Mg(2+) is required as a cofactor. Expressed by the venom gland.

The protein resides in the secreted. The catalysed reaction is an N-(acyl)-sphingosylphosphocholine = an N-(acyl)-sphingosyl-1,3-cyclic phosphate + choline. It carries out the reaction an N-(acyl)-sphingosylphosphoethanolamine = an N-(acyl)-sphingosyl-1,3-cyclic phosphate + ethanolamine. It catalyses the reaction a 1-acyl-sn-glycero-3-phosphocholine = a 1-acyl-sn-glycero-2,3-cyclic phosphate + choline. The enzyme catalyses a 1-acyl-sn-glycero-3-phosphoethanolamine = a 1-acyl-sn-glycero-2,3-cyclic phosphate + ethanolamine. Dermonecrotic toxins cleave the phosphodiester linkage between the phosphate and headgroup of certain phospholipids (sphingolipid and lysolipid substrates), forming an alcohol (often choline) and a cyclic phosphate. This toxin acts on sphingomyelin (SM). It may also act on ceramide phosphoethanolamine (CPE), lysophosphatidylcholine (LPC) and lysophosphatidylethanolamine (LPE), but not on lysophosphatidylserine (LPS), and lysophosphatidylglycerol (LPG). It acts by transphosphatidylation, releasing exclusively cyclic phosphate products as second products. Induces dermonecrosis, hemolysis, increased vascular permeability, edema, inflammatory response, and platelet aggregation. The sequence is that of Dermonecrotic toxin LspiSicTox-betaIE2i from Loxosceles spinulosa (Recluse spider).